The following is a 649-amino-acid chain: 1-deoxy-D-xylulose-5-phosphate synthase (649 aa).

Thiamine diphosphate contacts are provided by residues His73 and 114–116; that span reads SHA. Position 145 (Asp145) interacts with Mg(2+). Residues 146–147, Asn175, Tyr286, and Glu367 contribute to the thiamine diphosphate site; that span reads GA. Mg(2+) is bound at residue Asn175.

It belongs to the transketolase family. DXPS subfamily. Homodimer. Requires Mg(2+) as cofactor. Thiamine diphosphate is required as a cofactor.

It catalyses the reaction D-glyceraldehyde 3-phosphate + pyruvate + H(+) = 1-deoxy-D-xylulose 5-phosphate + CO2. It participates in metabolic intermediate biosynthesis; 1-deoxy-D-xylulose 5-phosphate biosynthesis; 1-deoxy-D-xylulose 5-phosphate from D-glyceraldehyde 3-phosphate and pyruvate: step 1/1. Functionally, catalyzes the acyloin condensation reaction between C atoms 2 and 3 of pyruvate and glyceraldehyde 3-phosphate to yield 1-deoxy-D-xylulose-5-phosphate (DXP). This chain is 1-deoxy-D-xylulose-5-phosphate synthase, found in Rhodococcus jostii (strain RHA1).